Here is a 126-residue protein sequence, read N- to C-terminus: Glycine cleavage system H protein (126 aa).

The Lipoyl-binding domain occupies 24–105; that stretch reads TLTVGITDHA…AYGVWLFKIK (82 aa). An N6-lipoyllysine modification is found at lysine 65.

Belongs to the GcvH family. The glycine cleavage system is composed of four proteins: P, T, L and H. The cofactor is (R)-lipoate.

In terms of biological role, the glycine cleavage system catalyzes the degradation of glycine. The H protein shuttles the methylamine group of glycine from the P protein to the T protein. This Burkholderia cenocepacia (strain ATCC BAA-245 / DSM 16553 / LMG 16656 / NCTC 13227 / J2315 / CF5610) (Burkholderia cepacia (strain J2315)) protein is Glycine cleavage system H protein.